Here is a 240-residue protein sequence, read N- to C-terminus: Probable phosphatase Pcar_2586 (240 aa).

The Zn(2+) site is built by histidine 12, histidine 14, histidine 20, histidine 45, glutamate 78, histidine 105, histidine 136, aspartate 197, and histidine 199.

Belongs to the PHP family. It depends on Zn(2+) as a cofactor.

The polypeptide is Probable phosphatase Pcar_2586 (Syntrophotalea carbinolica (strain DSM 2380 / NBRC 103641 / GraBd1) (Pelobacter carbinolicus)).